The sequence spans 47 residues: PhoP/PhoQ regulator MgrB (47 aa).

A helical membrane pass occupies residues 6 to 26 (WVVLGIVVVVCLLLWAQVFNI).

It belongs to the MgrB family. In terms of assembly, may form homooligomers. Probably interacts with the periplasmic domain of PhoQ.

It localises to the cell inner membrane. Its function is as follows. PhoP-regulated transcription is redox-sensitive, being activated when the periplasm becomes more reducing. MgrB acts between DsbA/DsbB and PhoP/PhoQ in this pathway. Represses PhoP/PhoQ signaling, possibly by binding to the periplasmic domain of PhoQ, altering its activity and that of downstream effector PhoP. This is PhoP/PhoQ regulator MgrB from Salmonella gallinarum (strain 287/91 / NCTC 13346).